The primary structure comprises 880 residues: Alanine--tRNA ligase (880 aa).

Positions 566, 570, 668, and 672 each coordinate Zn(2+).

The protein belongs to the class-II aminoacyl-tRNA synthetase family. The cofactor is Zn(2+).

The protein resides in the cytoplasm. It catalyses the reaction tRNA(Ala) + L-alanine + ATP = L-alanyl-tRNA(Ala) + AMP + diphosphate. Its function is as follows. Catalyzes the attachment of alanine to tRNA(Ala) in a two-step reaction: alanine is first activated by ATP to form Ala-AMP and then transferred to the acceptor end of tRNA(Ala). Also edits incorrectly charged Ser-tRNA(Ala) and Gly-tRNA(Ala) via its editing domain. The sequence is that of Alanine--tRNA ligase from Nostoc sp. (strain PCC 7120 / SAG 25.82 / UTEX 2576).